The chain runs to 399 residues: Probable dual-specificity RNA methyltransferase RlmN (399 aa).

The active-site Proton acceptor is E97. The Radical SAM core domain occupies Y103 to S381. A disulfide bridge links C110 with C386. C117, C121, and C124 together coordinate [4Fe-4S] cluster. S-adenosyl-L-methionine is bound by residues G203 to E204, S235, S258 to H260, and N343. The active-site S-methylcysteine intermediate is C386.

Belongs to the radical SAM superfamily. RlmN family. It depends on [4Fe-4S] cluster as a cofactor.

The protein localises to the cytoplasm. The enzyme catalyses adenosine(2503) in 23S rRNA + 2 reduced [2Fe-2S]-[ferredoxin] + 2 S-adenosyl-L-methionine = 2-methyladenosine(2503) in 23S rRNA + 5'-deoxyadenosine + L-methionine + 2 oxidized [2Fe-2S]-[ferredoxin] + S-adenosyl-L-homocysteine. It carries out the reaction adenosine(37) in tRNA + 2 reduced [2Fe-2S]-[ferredoxin] + 2 S-adenosyl-L-methionine = 2-methyladenosine(37) in tRNA + 5'-deoxyadenosine + L-methionine + 2 oxidized [2Fe-2S]-[ferredoxin] + S-adenosyl-L-homocysteine. In terms of biological role, specifically methylates position 2 of adenine 2503 in 23S rRNA and position 2 of adenine 37 in tRNAs. The sequence is that of Probable dual-specificity RNA methyltransferase RlmN from Roseiflexus sp. (strain RS-1).